The chain runs to 173 residues: Crossover junction endodeoxyribonuclease RuvC (173 aa).

Residues Asp-8, Glu-67, and Asp-139 contribute to the active site. Mg(2+)-binding residues include Asp-8, Glu-67, and Asp-139.

The protein belongs to the RuvC family. In terms of assembly, homodimer which binds Holliday junction (HJ) DNA. The HJ becomes 2-fold symmetrical on binding to RuvC with unstacked arms; it has a different conformation from HJ DNA in complex with RuvA. In the full resolvosome a probable DNA-RuvA(4)-RuvB(12)-RuvC(2) complex forms which resolves the HJ. Requires Mg(2+) as cofactor.

It localises to the cytoplasm. It catalyses the reaction Endonucleolytic cleavage at a junction such as a reciprocal single-stranded crossover between two homologous DNA duplexes (Holliday junction).. Functionally, the RuvA-RuvB-RuvC complex processes Holliday junction (HJ) DNA during genetic recombination and DNA repair. Endonuclease that resolves HJ intermediates. Cleaves cruciform DNA by making single-stranded nicks across the HJ at symmetrical positions within the homologous arms, yielding a 5'-phosphate and a 3'-hydroxyl group; requires a central core of homology in the junction. The consensus cleavage sequence is 5'-(A/T)TT(C/G)-3'. Cleavage occurs on the 3'-side of the TT dinucleotide at the point of strand exchange. HJ branch migration catalyzed by RuvA-RuvB allows RuvC to scan DNA until it finds its consensus sequence, where it cleaves and resolves the cruciform DNA. This is Crossover junction endodeoxyribonuclease RuvC from Pectobacterium carotovorum subsp. carotovorum (strain PC1).